Reading from the N-terminus, the 80-residue chain is UPF0181 protein SG1330 (80 aa).

The interval 58 to 80 (TEVLETPAARAETDPYDSNPDDD) is disordered.

It belongs to the UPF0181 family.

The sequence is that of UPF0181 protein SG1330 from Sodalis glossinidius (strain morsitans).